A 522-amino-acid polypeptide reads, in one-letter code: Transactivator/viroplasmin protein (522 aa).

The segment at Asp488–Asp522 is disordered.

It belongs to the caulimoviridae viroplasmin family.

Its subcellular location is the host cytoplasm. Its function is as follows. Enhances the ribosomal termination-reinitiation event leading to the translation of major open reading frames on the polycistronic viral RNAs. In Cauliflower mosaic virus (strain D/H) (CaMV), this protein is Transactivator/viroplasmin protein.